Reading from the N-terminus, the 232-residue chain is Zinc finger protein RTS2 (232 aa).

A C2H2-type zinc finger spans residues 24-48 (YYCQICQRQCKDANGFQSHNKSPSH). Disordered stretches follow at residues 180–199 (AKRQTEKVYQPEMKSEISGD) and 211–232 (GNGRVNKKKKKVPPRKDGIKFR).

The protein resides in the nucleus. In Saccharomyces cerevisiae (strain ATCC 204508 / S288c) (Baker's yeast), this protein is Zinc finger protein RTS2 (RTS2).